The primary structure comprises 357 residues: MMKQILFSGVIGLFLTLVGTPLLIKLLARKGYGQYIRDDGPREHHSKRGTPTMGGIAFILATIIAYFMSKVITGYTPTFSGLLVLGLMAGMGLVGFLDDYIKIVKRRSLGLRAKAKMAGQLIVGIAFAVLALQFADNHGNTPASTRLSFVEDFGWTIGPVLFVIWALFMILAMSNGVNLTDGLDGLATGAATMVFGAYTFIGVWQFQESCANAQTLTNPAACYEVRDPLDLAVVASALMGACFGFLWWNTSPAKIFMGDTGSLALGGALAGLAICSRTELLVALLGGLFVLITMSVVIQVGSFRLTGKRVFRMAPLQHHFELKGWSEVLVVVRFWIIQGMCVIVGLGLFYAGWAAKK.

Helical transmembrane passes span Gln4–Ile24, Thr52–Ile72, Pro77–Leu97, Ala115–Ala135, Phe153–Met173, Leu186–Phe206, Pro228–Trp248, Ile255–Cys275, Leu280–Val300, and Phe334–Ala354.

Belongs to the glycosyltransferase 4 family. MraY subfamily. Requires Mg(2+) as cofactor.

The protein localises to the cell membrane. It carries out the reaction UDP-N-acetyl-alpha-D-muramoyl-L-alanyl-gamma-D-glutamyl-meso-2,6-diaminopimeloyl-D-alanyl-D-alanine + di-trans,octa-cis-undecaprenyl phosphate = di-trans,octa-cis-undecaprenyl diphospho-N-acetyl-alpha-D-muramoyl-L-alanyl-D-glutamyl-meso-2,6-diaminopimeloyl-D-alanyl-D-alanine + UMP. It participates in cell wall biogenesis; peptidoglycan biosynthesis. Functionally, catalyzes the initial step of the lipid cycle reactions in the biosynthesis of the cell wall peptidoglycan: transfers peptidoglycan precursor phospho-MurNAc-pentapeptide from UDP-MurNAc-pentapeptide onto the lipid carrier undecaprenyl phosphate, yielding undecaprenyl-pyrophosphoryl-MurNAc-pentapeptide, known as lipid I. The protein is Phospho-N-acetylmuramoyl-pentapeptide-transferase of Streptomyces avermitilis (strain ATCC 31267 / DSM 46492 / JCM 5070 / NBRC 14893 / NCIMB 12804 / NRRL 8165 / MA-4680).